The sequence spans 90 residues: Putative F-box protein At5g16285 (90 aa).

The F-box domain occupies 1 to 46 (MRIESLLQHDVVERILERLAVNSLPRFKAVSKQWKSTIESQFFQGK).

This is Putative F-box protein At5g16285 from Arabidopsis thaliana (Mouse-ear cress).